A 430-amino-acid polypeptide reads, in one-letter code: MPYIESILAREVLDSRGNPTVEVEVYTESGAFGRAIVPSGASTGQYEAVELRDGDAQRFLGKGVLQAVKNVIEVIQPELEGYSVLEQTLIDKLLIKLDGTPNKSNLGANAILGVSLACAKAAANYLNLEFYQYVGGVLPKQMPVPMMNVINGGAHASNSVDFQEFMILPTGPTSFKEALRYGAEVFHHLGKILKQKGLPTTVGDEGGYAPDLNSNEEALQIILEAIKSAGYEPGKDIFLGMDVAASEFYDKKLQKYVLASENNKAFSSQELVHYYETLVSKYPIISIEDGLDENDWDGWKYLTQKLGNQIQLVGDDLFVTNTQKLAQGIENKIGNSILIKLNQIGTLTETLETIEMAKKASYTAVISHRSGETEDTTIADLAVATNAGQIKTGSCSRTDRMAKYNQLLRIEDQLVEAPFLGLKTFYNLKK.

Glutamine 163 serves as a coordination point for (2R)-2-phosphoglycerate. The Proton donor role is filled by glutamate 205. Aspartate 242, glutamate 288, and aspartate 315 together coordinate Mg(2+). The (2R)-2-phosphoglycerate site is built by lysine 340, arginine 369, serine 370, and lysine 391. The Proton acceptor role is filled by lysine 340.

It belongs to the enolase family. The cofactor is Mg(2+).

It localises to the cytoplasm. It is found in the secreted. The protein resides in the cell surface. It carries out the reaction (2R)-2-phosphoglycerate = phosphoenolpyruvate + H2O. The protein operates within carbohydrate degradation; glycolysis; pyruvate from D-glyceraldehyde 3-phosphate: step 4/5. Functionally, catalyzes the reversible conversion of 2-phosphoglycerate (2-PG) into phosphoenolpyruvate (PEP). It is essential for the degradation of carbohydrates via glycolysis. This chain is Enolase, found in Onion yellows phytoplasma (strain OY-M).